The primary structure comprises 988 residues: MKLVNLKQAILQAWKERWSDYQWAINMKKFFPKGVTWDILNLAEALLDQAMIGPAPNPLILSYLKYAINSQMVSYSTVLTAISKFDDFSRDLCIQSLLEIMDMFCDNLSCHGKAEECIGLCRALMSALNWLLRCATFYTDKLKDVLDPVAGENHLSMCLQRLKSILGSTKNRALIHIAKLEEPTSWTSVEQSQLRLSESISLLPSVQLRNQAEECVSLIRSIPSMLSVHSDQLQTNGFPTVHAVVMLEGTMNLTGDAQPLVEQMNTVKRMQRIPLHLFLLEVWKACIVGLIESPEGTEELKWTAFTFLKIPQALAKLKKLSSMEQDFNEDMKCAFEYLLKLTPLLDKADQRCNCDCVSLLLQECNKLGLLSEQNMENLMAKRTADREQAPRLKSSENSTIQPNPGLILRAEPTVTNILKTMDADHSKSPEGLLGVLGHMLSGKSLDLLLAAAAATGKLKSFARKFIQLNEFTRHIGVESSKAANVRALLFDISFLMLCHVAQTYGSEMILSEGCPGGEMPFFESWMQTCMPGEGRVLNPDHPCFRHPDIAKVEALVALLNTSTEMKLAQTKWHEVCLSIPAAILEIHNAWENGVLSSEAIQKITDNIKGKVCSLAVCAVAWLVAHVRMLGLDERDKSLQMIRQLGSPMFGDNTLQFYSERVIIMSSILDNMCSEVLQQTTTQIKFSAAGSEPMPYIHRLPPKTPIKEVLRGAFSSTLEKGWVDSRTLHNFDTLLHMGGVYWFCNNLVKELLRETRLEFALRAVELLYAIFCLDMQQLTLTLLGHVLPSLLTDSAKWHMLMDPPGRALAKLSVWCAMTSYSTQNKGQPSPRQRKRHREDIEDYSSLFPLDDTQQSKLMRLLSSNEEEHNVQANPVDRPMNSSLSASQIHNISSKEPLNRVLANLFLLISSVLGAKTAGAQTQFVQWFMEECVESLELGGKGCILQFMPFSMVSELVKVSTLSSPKIVLAITDLTLPLGRRVAAKALTAL.

Short sequence motifs (LXXLL motif) lie at residues 128 to 132 (LNWLL), 341 to 345 (LTPLL), 445 to 449 (LDLLL), 555 to 559 (LVALL), 786 to 790 (LPSLL), and 856 to 860 (LMRLL).

Belongs to the Mediator complex subunit 24 family. In terms of assembly, component of the Mediator complex.

The protein localises to the nucleus. Functionally, component of the Mediator complex, a coactivator involved in the regulated transcription of nearly all RNA polymerase II-dependent genes. Mediator functions as a bridge to convey information from gene-specific regulatory proteins to the basal RNA polymerase II transcription machinery. Mediator is recruited to promoters by direct interactions with regulatory proteins and serves as a scaffold for the assembly of a functional preinitiation complex with RNA polymerase II and the general transcription factors. The sequence is that of Mediator of RNA polymerase II transcription subunit 24 (med24) from Xenopus laevis (African clawed frog).